The sequence spans 508 residues: Chromosomal replication initiator protein DnaA (508 aa).

Positions 1 to 90 (MSVELWQQCV…RRSSAPRAAP (90 aa)) are domain I, interacts with DnaA modulators. Positions 91–171 (NAPVSAAVAA…QVEGALKHTS (81 aa)) are domain II. Positions 130 to 160 (EVEEPSSRDSFDSMSDSGSVPAASGRTEQRT) are disordered. Residues 172-388 (YLNRTFTFET…GALKRVIAHS (217 aa)) form a domain III, AAA+ region region. Positions 216, 218, 219, and 220 each coordinate ATP. Residues 389 to 508 (HFMGRDITIE…YKNLLRTLTT (120 aa)) form a domain IV, binds dsDNA region.

This sequence belongs to the DnaA family. In terms of assembly, oligomerizes as a right-handed, spiral filament on DNA at oriC.

The protein resides in the cytoplasm. Functionally, plays an essential role in the initiation and regulation of chromosomal replication. ATP-DnaA binds to the origin of replication (oriC) to initiate formation of the DNA replication initiation complex once per cell cycle. Binds the DnaA box (a 9 base pair repeat at the origin) and separates the double-stranded (ds)DNA. Forms a right-handed helical filament on oriC DNA; dsDNA binds to the exterior of the filament while single-stranded (ss)DNA is stabiized in the filament's interior. The ATP-DnaA-oriC complex binds and stabilizes one strand of the AT-rich DNA unwinding element (DUE), permitting loading of DNA polymerase. After initiation quickly degrades to an ADP-DnaA complex that is not apt for DNA replication. Binds acidic phospholipids. The chain is Chromosomal replication initiator protein DnaA from Pseudomonas entomophila (strain L48).